A 132-amino-acid chain; its full sequence is MAGTASAREALGRFGEELAAQHLQTLGMTILARNWRCRSGELDIVARDGYTLVVCEVKTRRGVGFGEPLESVTPRKAARLRQLAVAWLTEHAATRVDTTEGTHGYTAVRFDVVAILHRKEDGPTIEYVRGAF.

This sequence belongs to the UPF0102 family.

This is UPF0102 protein Acel_1550 from Acidothermus cellulolyticus (strain ATCC 43068 / DSM 8971 / 11B).